We begin with the raw amino-acid sequence, 987 residues long: Ephrin type-B receptor 4 (987 aa).

An N-terminal signal peptide occupies residues 1–15 (MELRALLCWASLATA). The Extracellular segment spans residues 16–539 (LEETLLNTKL…ESESWREQLA (524 aa)). The region spanning 17–202 (EETLLNTKLE…FYKKCSWLIT (186 aa)) is the Eph LBD domain. Cystine bridges form between Cys-61/Cys-184 and Cys-97/Cys-107. Residues Asn-203, Asn-335, and Asn-426 are each glycosylated (N-linked (GlcNAc...) asparagine). Fibronectin type-III domains are found at residues 323 to 432 (PPSA…TDRE) and 436 to 529 (AVSD…TQLD). The helical transmembrane segment at 540–560 (LIAGTAVVGVVLVLVVVIIAV) threads the bilayer. Over 561-987 (LCLRKQSNGR…GGTGGPAQQF (427 aa)) the chain is Cytoplasmic. Residues 615–899 (VKIEEVIGAG…ENGGASHPLL (285 aa)) form the Protein kinase domain. ATP is bound by residues 621 to 629 (IGAGEFGEV) and Lys-647. The active-site Proton acceptor is Asp-740. Ser-769, Ser-770, Ser-911, and Ser-943 each carry phosphoserine. An SAM domain is found at 907-971 (SAFGSVGEWL…LASVQHMKSQ (65 aa)). The segment at 965–987 (VQHMKSQAKPGAPGGTGGPAQQF) is disordered. Gly residues predominate over residues 976 to 987 (APGGTGGPAQQF). The PDZ-binding motif lies at 985–987 (QQF).

This sequence belongs to the protein kinase superfamily. Tyr protein kinase family. Ephrin receptor subfamily. As to quaternary structure, heterotetramer upon binding of the ligand. The heterotetramer is composed of an ephrin dimer and a receptor dimer. Oligomerization is probably required to induce biological responses. Interacts with RASA1; the interaction depends on EPHB4 tyrosine-phosphorylation. In terms of processing, phosphorylated; autophosphorylation is stimulated by EFNB2. Expressed in various organ systems, including lung, liver, kidney, intestine, muscle and heart. Expressed in myogenic progenitor cells.

It localises to the cell membrane. The catalysed reaction is L-tyrosyl-[protein] + ATP = O-phospho-L-tyrosyl-[protein] + ADP + H(+). Receptor tyrosine kinase which binds promiscuously transmembrane ephrin-B family ligands residing on adjacent cells, leading to contact-dependent bidirectional signaling into neighboring cells. The signaling pathway downstream of the receptor is referred to as forward signaling while the signaling pathway downstream of the ephrin ligand is referred to as reverse signaling. Together with its cognate ligand/functional ligand EFNB2 it is involved in the regulation of cell adhesion and migration, and plays a central role in heart morphogenesis, angiogenesis and blood vessel remodeling and permeability. EPHB4-mediated forward signaling controls cellular repulsion and segregation from EFNB2-expressing cells. The sequence is that of Ephrin type-B receptor 4 (Ephb4) from Mus musculus (Mouse).